Reading from the N-terminus, the 294-residue chain is 4-hydroxy-tetrahydrodipicolinate synthase (294 aa).

Threonine 47 is a binding site for pyruvate. Catalysis depends on tyrosine 136, which acts as the Proton donor/acceptor. Catalysis depends on lysine 164, which acts as the Schiff-base intermediate with substrate. A pyruvate-binding site is contributed by valine 206.

It belongs to the DapA family. In terms of assembly, homotetramer; dimer of dimers.

The protein resides in the cytoplasm. The enzyme catalyses L-aspartate 4-semialdehyde + pyruvate = (2S,4S)-4-hydroxy-2,3,4,5-tetrahydrodipicolinate + H2O + H(+). Its pathway is amino-acid biosynthesis; L-lysine biosynthesis via DAP pathway; (S)-tetrahydrodipicolinate from L-aspartate: step 3/4. Its function is as follows. Catalyzes the condensation of (S)-aspartate-beta-semialdehyde [(S)-ASA] and pyruvate to 4-hydroxy-tetrahydrodipicolinate (HTPA). This chain is 4-hydroxy-tetrahydrodipicolinate synthase, found in Cyanothece sp. (strain PCC 7425 / ATCC 29141).